The primary structure comprises 273 residues: Cytochrome b-c1 complex subunit Rieske, mitochondrial (273 aa).

The transit peptide at Met-1–Ser-61 directs the protein to the mitochondrion. The disordered stretch occupies residues Pro-25–Arg-46. Residues Ser-62 to Arg-110 lie on the Mitochondrial matrix side of the membrane. The helical transmembrane segment at Ala-111–Leu-133 threads the bilayer. Topologically, residues Lys-134–Gly-273 are mitochondrial intermembrane. Residues Arg-176–Leu-271 enclose the Rieske domain. The [2Fe-2S] cluster site is built by Cys-216, His-218, Cys-235, and His-238. Residues Cys-221 and Cys-237 are joined by a disulfide bond.

This sequence belongs to the Rieske iron-sulfur protein family. In terms of assembly, component of the ubiquinol-cytochrome c oxidoreductase (cytochrome b-c1 complex, complex III, CIII), a multisubunit enzyme composed of 3 respiratory subunits cytochrome b, cytochrome c1 and Rieske protein, 2 core protein subunits, and several low-molecular weight protein subunits. The complex exists as an obligatory dimer and forms supercomplexes (SCs) in the inner mitochondrial membrane with cytochrome c oxidase (complex IV, CIV). [2Fe-2S] cluster is required as a cofactor.

The protein localises to the mitochondrion inner membrane. The enzyme catalyses a quinol + 2 Fe(III)-[cytochrome c](out) = a quinone + 2 Fe(II)-[cytochrome c](out) + 2 H(+)(out). Component of the ubiquinol-cytochrome c oxidoreductase, a multisubunit transmembrane complex that is part of the mitochondrial electron transport chain which drives oxidative phosphorylation. The respiratory chain contains 3 multisubunit complexes succinate dehydrogenase (complex II, CII), ubiquinol-cytochrome c oxidoreductase (cytochrome b-c1 complex, complex III, CIII) and cytochrome c oxidase (complex IV, CIV), that cooperate to transfer electrons derived from NADH and succinate to molecular oxygen, creating an electrochemical gradient over the inner membrane that drives transmembrane transport and the ATP synthase. The cytochrome b-c1 complex catalyzes electron transfer from ubiquinol to cytochrome c, linking this redox reaction to translocation of protons across the mitochondrial inner membrane, with protons being carried across the membrane as hydrogens on the quinol. In the process called Q cycle, 2 protons are consumed from the matrix, 4 protons are released into the intermembrane space and 2 electrons are passed to cytochrome c. The Rieske protein is a catalytic core subunit containing a [2Fe-2S] iron-sulfur cluster. It cycles between 2 conformational states during catalysis to transfer electrons from the quinol bound in the Q(0) site in cytochrome b to cytochrome c1. In Zea mays (Maize), this protein is Cytochrome b-c1 complex subunit Rieske, mitochondrial.